We begin with the raw amino-acid sequence, 584 residues long: MSDTWSHIQAHKKQLDSLRERLQRRRKDPTQLGTEVGSVESGSARSDSPGPAIQSPPQVEVEHPPDPELEKRLLGYLSELSLSLPTDSLTITNQLNTSESPVSHSCIQSLLLKFSAQELIEVRQPSITSSSSSTLVTSVDHTKLWAMIGSAGQSQRTAVKRKADDITHQKRALGSSPSIQAPPSPPRKSSVSLATASISQLTASSGGGGGGADKKGRSNKVQASHLDMEIESLLSQQSTKEQQSKKVSQEILELLNTSSAKEQSIVEKFRSRGRAQVQEFCDYGTKEECVQSGDTPQPCTKLHFRRIINKHTDESLGDCSFLNTCFHMDTCKYVHYEIDSPPEAEGDALGPQAGAAELGLHSTVGDSNVGKLFPSQWICCDIRYLDVSILGKFAVVMADPPWDIHMELPYGTLTDDEMRKLNIPILQDDGFLFLWVTGRAMELGRECLSLWGYDRVDEIIWVKTNQLQRIIRTGRTGHWLNHGKEHCLVGVKGNPQGFNRGLDCDVIVAEVRSTSHKPDEIYGMIERLSPGTRKIELFGRPHNVQPNWITLGNQLDGIHLLDPEVVARFKKRYPDGVISKPKNM.

Disordered stretches follow at residues 1-65 (MSDT…EHPP) and 162-221 (KADD…SNKV). Polar residues predominate over residues 187–204 (RKSSVSLATASISQLTAS). Residues 213 to 220 (DKKGRSNK) carry the Nuclear localization signal motif. S-adenosyl-L-methionine-binding positions include 381–382 (DI) and D399. Residues 400–414 (PPWDIHMELPYGTLT) form a gate loop 1 region. Interaction with METTL14 stretches follow at residues 454-458 (DRVDE) and 468-484 (QRII…NHGK). Residues 466–483 (QLQRIIRTGRTGHWLNHG) are interphase loop. The segment at 469–482 (RIIRTGRTGHWLNH) is positively charged region required for RNA-binding. Positions 511–519 (VRSTSHKPD) are gate loop 2. S-adenosyl-L-methionine-binding positions include K517, 540–543 (RPHN), and 553–554 (NQ).

The protein belongs to the MT-A70-like family. Heterodimer; heterodimerizes with mettl14 to form an antiparallel heterodimer that constitutes an active methyltransferase. Component of the WMM complex, a N6-methyltransferase complex composed of a catalytic subcomplex, named MAC, and of an associated subcomplex, named MACOM. The MAC subcomplex is composed of mettl3 and mettl14. Expressed in the hemato-vascular system: enriched in sorted endothelial cells and haemogenic endothelium.

It localises to the nucleus. The protein localises to the nucleus speckle. Its subcellular location is the cytoplasm. It carries out the reaction an adenosine in mRNA + S-adenosyl-L-methionine = an N(6)-methyladenosine in mRNA + S-adenosyl-L-homocysteine + H(+). The METTL3-METTL14 heterodimer forms a N6-methyltransferase complex that methylates adenosine residues at the N(6) position of some RNAs and regulates various processes such as the circadian clock, differentiation of embryonic and hematopoietic stem cells, cortical neurogenesis, response to DNA damage, differentiation of T-cells and primary miRNA processing. In the heterodimer formed with mettl14, mettl3 constitutes the catalytic core. N6-methyladenosine (m6A), which takes place at the 5'-[AG]GAC-3' consensus sites of some mRNAs, plays a role in mRNA stability, processing and translation efficiency. M6A is also involved in hematopoietic stem cells specification: m6A methylation and subsequent destabilization of mRNAs, such as notch1a, leads to decreased Notch signaling, promoting endothelial to hematopoietic transition. M6A also takes place in other RNA molecules, such as primary miRNA (pri-miRNAs). Mediates methylation of pri-miRNAs. This is N(6)-adenosine-methyltransferase subunit METTL3 from Danio rerio (Zebrafish).